A 218-amino-acid polypeptide reads, in one-letter code: Thiopurine S-methyltransferase (218 aa).

Residues Trp-10, Leu-45, Glu-66, and Arg-123 each coordinate S-adenosyl-L-methionine.

This sequence belongs to the class I-like SAM-binding methyltransferase superfamily. TPMT family.

Its subcellular location is the cytoplasm. It carries out the reaction S-adenosyl-L-methionine + a thiopurine = S-adenosyl-L-homocysteine + a thiopurine S-methylether.. The chain is Thiopurine S-methyltransferase from Shewanella baltica (strain OS155 / ATCC BAA-1091).